An 85-amino-acid chain; its full sequence is ATP synthase subunit c (85 aa).

A run of 2 helical transmembrane segments spans residues 19–39 (LGAA…IGKI) and 62–82 (IIAA…CLLV).

It belongs to the ATPase C chain family. In terms of assembly, F-type ATPases have 2 components, F(1) - the catalytic core - and F(0) - the membrane proton channel. F(1) has five subunits: alpha(3), beta(3), gamma(1), delta(1), epsilon(1). F(0) has three main subunits: a(1), b(2) and c(10-14). The alpha and beta chains form an alternating ring which encloses part of the gamma chain. F(1) is attached to F(0) by a central stalk formed by the gamma and epsilon chains, while a peripheral stalk is formed by the delta and b chains.

The protein resides in the cell inner membrane. Functionally, f(1)F(0) ATP synthase produces ATP from ADP in the presence of a proton or sodium gradient. F-type ATPases consist of two structural domains, F(1) containing the extramembraneous catalytic core and F(0) containing the membrane proton channel, linked together by a central stalk and a peripheral stalk. During catalysis, ATP synthesis in the catalytic domain of F(1) is coupled via a rotary mechanism of the central stalk subunits to proton translocation. Key component of the F(0) channel; it plays a direct role in translocation across the membrane. A homomeric c-ring of between 10-14 subunits forms the central stalk rotor element with the F(1) delta and epsilon subunits. The chain is ATP synthase subunit c from Bacteroides fragilis (strain ATCC 25285 / DSM 2151 / CCUG 4856 / JCM 11019 / LMG 10263 / NCTC 9343 / Onslow / VPI 2553 / EN-2).